Consider the following 181-residue polypeptide: Small ribosomal subunit protein uS4 (181 aa).

The 63-residue stretch at 106–168 (RRLQTLVYRK…PTSRIVKAKV (63 aa)) folds into the S4 RNA-binding domain.

It belongs to the universal ribosomal protein uS4 family. As to quaternary structure, part of the 30S ribosomal subunit. Contacts protein S5. The interaction surface between S4 and S5 is involved in control of translational fidelity.

Its function is as follows. One of the primary rRNA binding proteins, it binds directly to 16S rRNA where it nucleates assembly of the body of the 30S subunit. Functionally, with S5 and S12 plays an important role in translational accuracy. This chain is Small ribosomal subunit protein uS4, found in Caldivirga maquilingensis (strain ATCC 700844 / DSM 13496 / JCM 10307 / IC-167).